A 1042-amino-acid chain; its full sequence is V(D)J recombination-activating protein 1 (1042 aa).

A compositionally biased stretch (basic and acidic residues) spans 40–52; the sequence is KTTEENQKEKNSS. The interval 40–80 is disordered; the sequence is KTTEENQKEKNSSEGKPSLEQSPAVLDKASGQKPEVAPPAF. Lysine 233 is covalently cross-linked (Glycyl lysine isopeptide (Lys-Gly) (interchain with G-Cter in ubiquitin)). Zn(2+) is bound by residues cysteine 268, histidine 272, cysteine 292, cysteine 295, histidine 297, cysteine 307, histidine 309, cysteine 312, cysteine 315, cysteine 327, cysteine 330, cysteine 357, cysteine 362, histidine 374, and histidine 378. The RING-type zinc-finger motif lies at 292–331; that stretch reads CQICEHILADPVETSCKHVFCRICILRCLKVMGSYCPSCQ. The RAG1-type zinc-finger motif lies at 353 to 382; that stretch reads LIVKCSAPECNEEVSLEKYNHHVSSHKESR. Positions 391–458 form a DNA-binding region, NBD; it reads GGRPRQHLLS…QADELEAIMQ (68 aa). 3 residues coordinate a divalent metal cation: aspartate 602, aspartate 710, and glutamate 964.

The protein belongs to the RAG1 family. In terms of assembly, homodimer. Component of the RAG complex composed of core components RAG1 and RAG2, and associated component HMGB1 or HMGB2. Interacts with DCAF1, leading to recruitment of the CUL4A-RBX1-DDB1-DCAF1/VPRBP complex to ubiquitinate proteins and limit error-prone repair during V(D)J recombination. Mg(2+) serves as cofactor. It depends on Mn(2+) as a cofactor. Autoubiquitinated in the presence of CDC34/UBCH3.

The protein resides in the nucleus. It carries out the reaction S-ubiquitinyl-[E2 ubiquitin-conjugating enzyme]-L-cysteine + [acceptor protein]-L-lysine = [E2 ubiquitin-conjugating enzyme]-L-cysteine + N(6)-ubiquitinyl-[acceptor protein]-L-lysine.. Functionally, catalytic component of the RAG complex, a multiprotein complex that mediates the DNA cleavage phase during V(D)J recombination. V(D)J recombination assembles a diverse repertoire of immunoglobulin and T-cell receptor genes in developing B and T-lymphocytes through rearrangement of different V (variable), in some cases D (diversity), and J (joining) gene segments. In the RAG complex, RAG1 mediates the DNA-binding to the conserved recombination signal sequences (RSS) and catalyzes the DNA cleavage activities by introducing a double-strand break between the RSS and the adjacent coding segment. RAG2 is not a catalytic component but is required for all known catalytic activities. DNA cleavage occurs in 2 steps: a first nick is introduced in the top strand immediately upstream of the heptamer, generating a 3'-hydroxyl group that can attack the phosphodiester bond on the opposite strand in a direct transesterification reaction, thereby creating 4 DNA ends: 2 hairpin coding ends and 2 blunt, 5'-phosphorylated ends. The chromatin structure plays an essential role in the V(D)J recombination reactions and the presence of histone H3 trimethylated at 'Lys-4' (H3K4me3) stimulates both the nicking and haipinning steps. The RAG complex also plays a role in pre-B cell allelic exclusion, a process leading to expression of a single immunoglobulin heavy chain allele to enforce clonality and monospecific recognition by the B-cell antigen receptor (BCR) expressed on individual B-lymphocytes. The introduction of DNA breaks by the RAG complex on one immunoglobulin allele induces ATM-dependent repositioning of the other allele to pericentromeric heterochromatin, preventing accessibility to the RAG complex and recombination of the second allele. In addition to its endonuclease activity, RAG1 also acts as an E3 ubiquitin-protein ligase that mediates monoubiquitination of histone H3. Histone H3 monoubiquitination is required for the joining step of V(D)J recombination. Mediates polyubiquitination of KPNA1. This is V(D)J recombination-activating protein 1 (RAG1) from Oryctolagus cuniculus (Rabbit).